Reading from the N-terminus, the 353-residue chain is Pleckstrin-2 (353 aa).

At Met1 the chain carries N-acetylmethionine. Residues 4–104 enclose the PH 1 domain; sequence GVLKEGFLVK…WAFEITGAIH (101 aa). Ser120 carries the post-translational modification Phosphoserine. The DEP domain maps to 139 to 225; sequence SNTGIRSSPN…DSTALYTFAE (87 aa). The 107-residue stretch at 247–353 folds into the PH 2 domain; the sequence is TVVKQGYLAK…EWIEAIKKLT (107 aa).

The protein localises to the cell projection. The protein resides in the lamellipodium membrane. It localises to the cytoplasm. Its subcellular location is the cytoskeleton. May help orchestrate cytoskeletal arrangement. Contribute to lamellipodia formation. This Homo sapiens (Human) protein is Pleckstrin-2 (PLEK2).